A 591-amino-acid polypeptide reads, in one-letter code: Aspartate--tRNA(Asp/Asn) ligase (591 aa).

An L-aspartate-binding site is contributed by glutamate 176. An aspartate region spans residues 200–203 (QLFK). L-aspartate is bound at residue arginine 222. Residues 222–224 (RDE) and glutamine 231 each bind ATP. Histidine 450 contributes to the L-aspartate binding site. Glutamate 484 serves as a coordination point for ATP. An L-aspartate-binding site is contributed by arginine 491. Residue 536–539 (GLDR) participates in ATP binding.

It belongs to the class-II aminoacyl-tRNA synthetase family. Type 1 subfamily. In terms of assembly, homodimer.

Its subcellular location is the cytoplasm. The catalysed reaction is tRNA(Asx) + L-aspartate + ATP = L-aspartyl-tRNA(Asx) + AMP + diphosphate. In terms of biological role, aspartyl-tRNA synthetase with relaxed tRNA specificity since it is able to aspartylate not only its cognate tRNA(Asp) but also tRNA(Asn). Reaction proceeds in two steps: L-aspartate is first activated by ATP to form Asp-AMP and then transferred to the acceptor end of tRNA(Asp/Asn). The protein is Aspartate--tRNA(Asp/Asn) ligase of Bacillus cereus (strain ATCC 14579 / DSM 31 / CCUG 7414 / JCM 2152 / NBRC 15305 / NCIMB 9373 / NCTC 2599 / NRRL B-3711).